We begin with the raw amino-acid sequence, 127 residues long: Large ribosomal subunit protein bL12 (127 aa).

Belongs to the bacterial ribosomal protein bL12 family. As to quaternary structure, homodimer. Part of the ribosomal stalk of the 50S ribosomal subunit. Forms a multimeric L10(L12)X complex, where L10 forms an elongated spine to which 2 to 4 L12 dimers bind in a sequential fashion. Binds GTP-bound translation factors.

Forms part of the ribosomal stalk which helps the ribosome interact with GTP-bound translation factors. Is thus essential for accurate translation. This is Large ribosomal subunit protein bL12 from Syntrophotalea carbinolica (strain DSM 2380 / NBRC 103641 / GraBd1) (Pelobacter carbinolicus).